The chain runs to 280 residues: 2-dehydro-3-deoxyphosphooctonate aldolase (280 aa).

It belongs to the KdsA family.

The protein localises to the cytoplasm. The catalysed reaction is D-arabinose 5-phosphate + phosphoenolpyruvate + H2O = 3-deoxy-alpha-D-manno-2-octulosonate-8-phosphate + phosphate. Its pathway is carbohydrate biosynthesis; 3-deoxy-D-manno-octulosonate biosynthesis; 3-deoxy-D-manno-octulosonate from D-ribulose 5-phosphate: step 2/3. It participates in bacterial outer membrane biogenesis; lipopolysaccharide biosynthesis. The chain is 2-dehydro-3-deoxyphosphooctonate aldolase from Coxiella burnetii (strain Dugway 5J108-111).